The primary structure comprises 184 residues: Photosystem I assembly protein Ycf4 (184 aa).

A run of 2 helical transmembrane segments spans residues 22-42 (FCWA…GISS) and 57-77 (IIFF…LFIS).

It belongs to the Ycf4 family.

Its subcellular location is the plastid. It localises to the chloroplast thylakoid membrane. Functionally, seems to be required for the assembly of the photosystem I complex. This Populus alba (White poplar) protein is Photosystem I assembly protein Ycf4.